The sequence spans 377 residues: tRNA(Met) cytidine acetate ligase (377 aa).

ATP is bound by residues 7-20 (VVEYNPFHNGHRYH), G101, N151, and R176.

The protein belongs to the TmcAL family.

Its subcellular location is the cytoplasm. It carries out the reaction cytidine(34) in elongator tRNA(Met) + acetate + ATP = N(4)-acetylcytidine(34) in elongator tRNA(Met) + AMP + diphosphate. Its function is as follows. Catalyzes the formation of N(4)-acetylcytidine (ac(4)C) at the wobble position of elongator tRNA(Met), using acetate and ATP as substrates. First activates an acetate ion to form acetyladenylate (Ac-AMP) and then transfers the acetyl group to tRNA to form ac(4)C34. This chain is tRNA(Met) cytidine acetate ligase, found in Limosilactobacillus reuteri (strain DSM 20016) (Lactobacillus reuteri).